The primary structure comprises 356 residues: Tyrosine recombinase XerS (356 aa).

Positions 16–121 (IMPWYVLDYY…ALSSLYKYLT (106 aa)) constitute a Core-binding (CB) domain. In terms of domain architecture, Tyr recombinase spans 169 to 354 (AFLDYVDKEY…VNDEQKTALD (186 aa)). Residues Arg210, Lys234, His306, Arg309, and His332 contribute to the active site. The active-site O-(3'-phospho-DNA)-tyrosine intermediate is Tyr341.

The protein belongs to the 'phage' integrase family. XerS subfamily.

Its subcellular location is the cytoplasm. FtsK is required for recombination. Its function is as follows. Site-specific tyrosine recombinase, which acts by catalyzing the cutting and rejoining of the recombining DNA molecules. Essential to convert dimers of the bacterial chromosome into monomers to permit their segregation at cell division. This Streptococcus pyogenes serotype M12 (strain MGAS9429) protein is Tyrosine recombinase XerS.